Here is a 156-residue protein sequence, read N- to C-terminus: Ribosome maturation factor RimP (156 aa).

It belongs to the RimP family.

The protein localises to the cytoplasm. In terms of biological role, required for maturation of 30S ribosomal subunits. The protein is Ribosome maturation factor RimP of Gloeobacter violaceus (strain ATCC 29082 / PCC 7421).